A 218-amino-acid polypeptide reads, in one-letter code: Adenylate kinase (218 aa).

ATP is bound at residue 10-15 (GAGKGT). Residues 30–59 (STGDMLRAAIQAQTPLGLEAKKVMDDGKLV) are NMP. AMP-binding positions include Thr31, Arg36, 57–59 (KLV), 85–88 (GFPR), and Gln92. Residues 122–159 (GRRVHLASGRTYHVIFNPPKKEGVDDITGEPLIQREDD) are LID. ATP is bound by residues Arg123 and 132–133 (TY). The AMP site is built by Arg156 and Arg167. Gly203 lines the ATP pocket.

The protein belongs to the adenylate kinase family. In terms of assembly, monomer.

The protein resides in the cytoplasm. It carries out the reaction AMP + ATP = 2 ADP. Its pathway is purine metabolism; AMP biosynthesis via salvage pathway; AMP from ADP: step 1/1. Its function is as follows. Catalyzes the reversible transfer of the terminal phosphate group between ATP and AMP. Plays an important role in cellular energy homeostasis and in adenine nucleotide metabolism. The sequence is that of Adenylate kinase from Prosthecochloris aestuarii (strain DSM 271 / SK 413).